A 367-amino-acid chain; its full sequence is Serine/threonine-protein kinase Sgk2 (367 aa).

Residues 1–28 are disordered; it reads MASSPVGVPSPQPSRANGNINLGPSANP. S10 is modified (phosphoserine). Over residues 15-28 the composition is skewed to polar residues; sequence RANGNINLGPSANP. The 258-residue stretch at 35–292 folds into the Protein kinase domain; sequence FDFLKVIGKG…FLDIKNHMFF (258 aa). Residues 41 to 49 and K64 each bind ATP; that span reads IGKGNYGKV. Residues 68–77 carry the Nuclear localization signal motif; sequence KKSILKNKEQ. Catalysis depends on D159, which acts as the Proton acceptor. T193 bears the Phosphothreonine; by PDPK1 mark. Residues 293 to 367 form the AGC-kinase C-terminal domain; it reads SPINWDDLYH…AQDDDDILDS (75 aa). 2 positions are modified to phosphoserine: S334 and S356. At Y357 the chain carries Phosphotyrosine.

Belongs to the protein kinase superfamily. AGC Ser/Thr protein kinase family. In terms of processing, activated by phosphorylation on Ser-356 by an unknown kinase (may be mTORC2 but not confirmed), transforming it into a substrate for PDPK1 which then phosphorylates it on Thr-193. As to expression, expressed in the proximal tubule and thick ascending limb of the loop of Henle (TALH).

Its subcellular location is the cytoplasm. It localises to the nucleus. The catalysed reaction is L-seryl-[protein] + ATP = O-phospho-L-seryl-[protein] + ADP + H(+). The enzyme catalyses L-threonyl-[protein] + ATP = O-phospho-L-threonyl-[protein] + ADP + H(+). Two specific sites, one in the kinase domain (Thr-193) and the other in the C-terminal regulatory region (Ser-356), need to be phosphorylated for its full activation. Serine/threonine-protein kinase which is involved in the regulation of a wide variety of ion channels, membrane transporters, cell growth, survival and proliferation. Up-regulates Na(+) channels: SCNN1A/ENAC, K(+) channels: KCNA3/Kv1.3, KCNE1 and KCNQ1, amino acid transporter: SLC6A19, glutamate transporter: SLC1A6/EAAT4, glutamate receptors: GRIA1/GLUR1 and GRIK2/GLUR6, Na(+)/H(+) exchanger: SLC9A3/NHE3, and the Na(+)/K(+) ATPase. This is Serine/threonine-protein kinase Sgk2 (Sgk2) from Rattus norvegicus (Rat).